Reading from the N-terminus, the 202-residue chain is Helix-loop-helix protein 10 (202 aa).

2 disordered regions span residues Met-1–Leu-26 and Gln-83–Asp-112. Residues Ser-17–Leu-26 are compositionally biased toward polar residues. The tract at residues Thr-121 to Val-134 is basic motif. The region spanning Thr-121–Leu-172 is the bHLH domain. Positions Gln-135–Leu-172 are helix-loop-helix motif.

As to quaternary structure, heterodimer with hlh-2. As to expression, expressed in intestine, neurons in head, body and tail, and in body hypodermis, and vulva. Expressed in neurons in the male-specific genital sensilla (simple sense organs) known as rays.

The protein localises to the nucleus. Its subcellular location is the cytoplasm. In terms of biological role, probable transcription factor which binds the E box motif 5'-CA[TC][AG]TG-3'. The polypeptide is Helix-loop-helix protein 10 (Caenorhabditis elegans).